A 129-amino-acid chain; its full sequence is Phosphoribosyl-AMP cyclohydrolase (129 aa).

Residue D76 participates in Mg(2+) binding. Position 77 (C77) interacts with Zn(2+). Positions 78 and 80 each coordinate Mg(2+). Positions 97 and 104 each coordinate Zn(2+).

This sequence belongs to the PRA-CH family. As to quaternary structure, homodimer. The cofactor is Mg(2+). Zn(2+) serves as cofactor.

Its subcellular location is the cytoplasm. It catalyses the reaction 1-(5-phospho-beta-D-ribosyl)-5'-AMP + H2O = 1-(5-phospho-beta-D-ribosyl)-5-[(5-phospho-beta-D-ribosylamino)methylideneamino]imidazole-4-carboxamide. The protein operates within amino-acid biosynthesis; L-histidine biosynthesis; L-histidine from 5-phospho-alpha-D-ribose 1-diphosphate: step 3/9. Its function is as follows. Catalyzes the hydrolysis of the adenine ring of phosphoribosyl-AMP. The sequence is that of Phosphoribosyl-AMP cyclohydrolase from Leptothrix cholodnii (strain ATCC 51168 / LMG 8142 / SP-6) (Leptothrix discophora (strain SP-6)).